The following is a 146-amino-acid chain: Holo-[acyl-carrier-protein] synthase (146 aa).

Residues Asp9 and Glu63 each coordinate Mg(2+).

It belongs to the P-Pant transferase superfamily. AcpS family. Mg(2+) serves as cofactor.

It localises to the cytoplasm. The catalysed reaction is apo-[ACP] + CoA = holo-[ACP] + adenosine 3',5'-bisphosphate + H(+). Its function is as follows. Transfers the 4'-phosphopantetheine moiety from coenzyme A to a Ser of acyl-carrier-protein. The chain is Holo-[acyl-carrier-protein] synthase from Burkholderia orbicola (strain MC0-3).